Consider the following 482-residue polypeptide: tRNA sulfurtransferase (482 aa).

Residues 61-165 (DQILAILMQT…YDHLHQVLHR (105 aa)) enclose the THUMP domain. ATP-binding positions include 183-184 (LI), Lys-265, Gly-287, and Gln-296. A disulfide bridge links Cys-344 with Cys-456. Residues 404–482 (IGDGAIVLDI…GYGNIKVYRP (79 aa)) enclose the Rhodanese domain. Catalysis depends on Cys-456, which acts as the Cysteine persulfide intermediate.

It belongs to the ThiI family.

Its subcellular location is the cytoplasm. The catalysed reaction is [ThiI sulfur-carrier protein]-S-sulfanyl-L-cysteine + a uridine in tRNA + 2 reduced [2Fe-2S]-[ferredoxin] + ATP + H(+) = [ThiI sulfur-carrier protein]-L-cysteine + a 4-thiouridine in tRNA + 2 oxidized [2Fe-2S]-[ferredoxin] + AMP + diphosphate. It catalyses the reaction [ThiS sulfur-carrier protein]-C-terminal Gly-Gly-AMP + S-sulfanyl-L-cysteinyl-[cysteine desulfurase] + AH2 = [ThiS sulfur-carrier protein]-C-terminal-Gly-aminoethanethioate + L-cysteinyl-[cysteine desulfurase] + A + AMP + 2 H(+). The protein operates within cofactor biosynthesis; thiamine diphosphate biosynthesis. Functionally, catalyzes the ATP-dependent transfer of a sulfur to tRNA to produce 4-thiouridine in position 8 of tRNAs, which functions as a near-UV photosensor. Also catalyzes the transfer of sulfur to the sulfur carrier protein ThiS, forming ThiS-thiocarboxylate. This is a step in the synthesis of thiazole, in the thiamine biosynthesis pathway. The sulfur is donated as persulfide by IscS. This chain is tRNA sulfurtransferase, found in Photobacterium profundum (strain SS9).